Consider the following 397-residue polypeptide: S-adenosylmethionine synthase (397 aa).

Histidine 15 is a binding site for ATP. Aspartate 17 is a Mg(2+) binding site. Residue glutamate 43 participates in K(+) binding. Residues glutamate 56 and glutamine 99 each coordinate L-methionine. Residues 99–109 (QSGDIAMGVDE) form a flexible loop region. Residues 175–177 (DGK), 241–242 (RF), aspartate 250, 256–257 (RK), alanine 273, and lysine 277 each bind ATP. Aspartate 250 provides a ligand contact to L-methionine. L-methionine is bound at residue lysine 281.

The protein belongs to the AdoMet synthase family. As to quaternary structure, homotetramer; dimer of dimers. It depends on Mg(2+) as a cofactor. K(+) serves as cofactor.

The protein localises to the cytoplasm. It carries out the reaction L-methionine + ATP + H2O = S-adenosyl-L-methionine + phosphate + diphosphate. The protein operates within amino-acid biosynthesis; S-adenosyl-L-methionine biosynthesis; S-adenosyl-L-methionine from L-methionine: step 1/1. Its function is as follows. Catalyzes the formation of S-adenosylmethionine (AdoMet) from methionine and ATP. The overall synthetic reaction is composed of two sequential steps, AdoMet formation and the subsequent tripolyphosphate hydrolysis which occurs prior to release of AdoMet from the enzyme. The polypeptide is S-adenosylmethionine synthase (Clostridioides difficile (strain 630) (Peptoclostridium difficile)).